Here is a 347-residue protein sequence, read N- to C-terminus: MVTRAGAGTAVAGAVVVALLSAALALYGPPLDAVLERAFSLRKAHSIKDMENTLQLVRNIIPPLSSTKHKGQDGRIGVVGGCQEYTGAPYFAAISALKVGADLSHVFCASAAAPVIKAYSPELIVHPVLDSPNAVHEVEKWLPRLHALVVGPGLGRDDALLRNVQGILEVSKARDIPVVIDADGLWLVAQQPALIHGYRKAVLTPNHVEFSRLYDAVLRGPMDSDDSHGSVLRLSQALGNVTVVQKGERDILSNGQQVLVCSQEGSSRRCGGQGDLLSGSLGVLVHWALLAGPQKTNGSSPLLVAAFGACSLTRQCNHQAFQKHGRSTTTSDMIAEVGAAFSKLFET.

The YjeF C-terminal domain maps to 53–344; sequence TLQLVRNIIP…AEVGAAFSKL (292 aa). Y85 is modified (phosphotyrosine). (6S)-NADPHX is bound by residues G153 and 206-212; that span reads NHVEFSR. N-linked (GlcNAc...) asparagine glycosylation occurs at N240. ATP contacts are provided by residues 246 to 250 and 265 to 274; these read KGERD and GSSRRCGGQG. D275 is a binding site for (6S)-NADPHX. A glycan (N-linked (GlcNAc...) asparagine) is linked at N297.

It belongs to the NnrD/CARKD family. The cofactor is Mg(2+).

The protein localises to the mitochondrion. The catalysed reaction is (6S)-NADHX + ATP = ADP + phosphate + NADH + H(+). It carries out the reaction (6S)-NADPHX + ATP = ADP + phosphate + NADPH + H(+). Catalyzes the dehydration of the S-form of NAD(P)HX at the expense of ATP, which is converted to ADP. Together with NAD(P)HX epimerase, which catalyzes the epimerization of the S- and R-forms, the enzyme allows the repair of both epimers of NAD(P)HX, a damaged form of NAD(P)H that is a result of enzymatic or heat-dependent hydration. This chain is ATP-dependent (S)-NAD(P)H-hydrate dehydratase, found in Homo sapiens (Human).